A 622-amino-acid polypeptide reads, in one-letter code: Probable potassium transport system protein Kup (622 aa).

12 consecutive transmembrane segments (helical) span residues 8-28 (LAAL…TSVL), 50-70 (ILSI…VVLV), 103-123 (LAVG…TPAI), 137-157 (PHFK…LFAV), 168-188 (FFGP…LAHI), 203-223 (ALGF…AVVL), 247-267 (WFGV…ALLL), 285-305 (ALIP…QALI), 337-357 (IYMP…VVMF), 366-386 (AYGI…FFVI), 393-413 (PLAL…AFFA), and 419-439 (LFQG…LMMT).

The protein belongs to the HAK/KUP transporter (TC 2.A.72) family.

It is found in the cell inner membrane. The catalysed reaction is K(+)(in) + H(+)(in) = K(+)(out) + H(+)(out). Its function is as follows. Transport of potassium into the cell. Likely operates as a K(+):H(+) symporter. The polypeptide is Probable potassium transport system protein Kup (Verminephrobacter eiseniae (strain EF01-2)).